Consider the following 216-residue polypeptide: Probable flavin-dependent thymidylate synthase (216 aa).

A ThyX domain is found at 1-216 (MSAKLISVTK…PSIAKALDWV (216 aa)). Residues serine 55, 78 to 80 (RHR), and glutamate 86 contribute to the FAD site. DUMP-binding positions include 75 to 78 (QVLR), 86 to 90 (EFSQR), and arginine 155. The short motif at 78-88 (RHRSFHFQEFS) is the ThyX motif element. Histidine 177 contributes to the FAD binding site. Arginine 182 contacts dUMP. The Involved in ionization of N3 of dUMP, leading to its activation role is filled by arginine 182.

This sequence belongs to the thymidylate synthase ThyX family. Homotetramer. It depends on FAD as a cofactor.

The enzyme catalyses dUMP + (6R)-5,10-methylene-5,6,7,8-tetrahydrofolate + NADPH + H(+) = dTMP + (6S)-5,6,7,8-tetrahydrofolate + NADP(+). It functions in the pathway pyrimidine metabolism; dTTP biosynthesis. Catalyzes the reductive methylation of 2'-deoxyuridine-5'-monophosphate (dUMP) to 2'-deoxythymidine-5'-monophosphate (dTMP) while utilizing 5,10-methylenetetrahydrofolate (mTHF) as the methyl donor, and NADPH and FADH(2) as the reductant. This is Probable flavin-dependent thymidylate synthase from Paramecium bursaria Chlorella virus 1 (PBCV-1).